The following is a 169-amino-acid chain: Ribosome maturation factor RimM (169 aa).

Residues 97–169 (PGEYYWYQLI…VITVDWDMNF (73 aa)) enclose the PRC barrel domain.

This sequence belongs to the RimM family. In terms of assembly, binds ribosomal protein uS19.

The protein resides in the cytoplasm. Functionally, an accessory protein needed during the final step in the assembly of 30S ribosomal subunit, possibly for assembly of the head region. Essential for efficient processing of 16S rRNA. May be needed both before and after RbfA during the maturation of 16S rRNA. It has affinity for free ribosomal 30S subunits but not for 70S ribosomes. This is Ribosome maturation factor RimM from Legionella pneumophila (strain Paris).